The chain runs to 759 residues: uncharacterized protein (759 aa).

2 disordered regions span residues 1 to 31 and 188 to 211; these read MDGNRRVRFNTDRRPYLSPLQTSFPSSTSFQ and NDEGEDVKDNEQDDNIDESDPFAN. Residues 17-31 show a composition bias toward low complexity; sequence LSPLQTSFPSSTSFQ. The span at 189–207 shows a compositional bias: acidic residues; it reads DEGEDVKDNEQDDNIDESD. 10 consecutive transmembrane segments (helical) span residues 434–454, 456–476, 486–505, 517–537, 555–575, 597–617, 620–640, 643–663, 670–690, and 726–746; these read YFRTWILVVFYGFASATILPM, FQGGWIDLPIAFILGCLVGIL, MYNSLFEVTGSIITSFLSRA, FCFSALAEGAIVLILPGYIVL, MFYAIIYSLFLSFGISIGAAL, DKWKILFVPLFTLCLLIVNQA, SQWPVSIFISCAGYVVNYFTA, FGSNPIANAIGSFAIGCLGNI, GVAFAAVLPAIFVQVPSGLAA, and LVMVQIAIGISVGLFASALVV.

Belongs to the ThrE exporter (TC 2.A.79) family.

The protein localises to the endoplasmic reticulum membrane. This is an uncharacterized protein from Schizosaccharomyces pombe (strain 972 / ATCC 24843) (Fission yeast).